The chain runs to 537 residues: Cytochrome P450 monooxygenase ltmQ (537 aa).

A helical membrane pass occupies residues 10–30 (FPKLNFATIVISGATIIGIIF). 3 N-linked (GlcNAc...) asparagine glycosylation sites follow: N182, N188, and N310. A heme-binding site is contributed by C476.

The protein belongs to the cytochrome P450 family. Heme serves as cofactor.

The protein resides in the membrane. It participates in secondary metabolite biosynthesis. In terms of biological role, cytochrome P450 monooxygenase; part of the gene clusters that mediates the biosynthesis of lolitrems, indole-diterpene mycotoxins that are potent tremorgens in mammals, and are synthesized by clavicipitaceous fungal endophytes in association with their grass hosts. The geranylgeranyl diphosphate (GGPP) synthase ltmG is proposed to catalyze the first step in lolitrem biosynthesis. LtmG catalyzes a series of iterative condensations of isopentenyl diphosphate (IPP) with dimethylallyl diphosphate (DMAPP), geranyl diphosphate (GPP), and farnesyl diphosphate (FPP), to form GGPP. GGPP then condenses with indole-3-glycerol phosphate to form 3-geranylgeranylindole, an acyclic intermediate, to be incorporated into paxilline. Either ltmG or ltmC could be responsible for this step, as both are putative prenyl transferases. The FAD-dependent monooxygenase ltmM then catalyzes the epoxidation of the two terminal alkenes of the geranylgeranyl moiety, which is subsequently cyclized by ltmB, to paspaline. The cytochrome P450 monooxygenases ltmQ and ltmP can sequentially oxidize paspaline to terpendole E and terpendole F. Alternatively, ltmP converts paspaline to an intermediate which is oxidized by ltmQ to terpendole F. LtmF, ltmK, ltmE and ltmJ appear to be unique to the epichloe endophytes. The prenyltransferase ltmF is involved in the 27-hydroxyl-O-prenylation. The cytochrome P450 monooxygenase ltmK is required for the oxidative acetal ring formation. The multi-functional prenyltransferase ltmE is required for C20- and C21-prenylations of the indole ring of paspalanes and acts together with the cytochrome P450 monooxygenase ltmJ to yield lolitremanes by multiple oxidations and ring closures. The stereoisomer pairs of lolitriol and lolitrem N or lolitrem B and lolitrem F may be attributed to variations in the way in which ring closure can occur under the action of ltmJ. While the major product of this pathway is lolitrem B, the prenyl transferases and cytochrome P450 monooxygenases identified in this pathway have a remarkable versatility in their regio- and stereo-specificities to generate a diverse range of metabolites that are products of a metabolic grid rather than a linear pathway. The polypeptide is Cytochrome P450 monooxygenase ltmQ (Epichloe festucae var. lolii (Neotyphodium lolii)).